Here is a 120-residue protein sequence, read N- to C-terminus: Large ribosomal subunit protein uL29 (120 aa).

The protein belongs to the universal ribosomal protein uL29 family. As to quaternary structure, component of the large ribosomal subunit. Mature ribosomes consist of a small (40S) and a large (60S) subunit. The 40S subunit contains about 32 different proteins and 1 molecule of RNA (18S). The 60S subunit contains 45 different proteins and 3 molecules of RNA (25S, 5.8S and 5S).

It localises to the cytoplasm. In terms of biological role, component of the ribosome, a large ribonucleoprotein complex responsible for the synthesis of proteins in the cell. The small ribosomal subunit (SSU) binds messenger RNAs (mRNAs) and translates the encoded message by selecting cognate aminoacyl-transfer RNA (tRNA) molecules. The large subunit (LSU) contains the ribosomal catalytic site termed the peptidyl transferase center (PTC), which catalyzes the formation of peptide bonds, thereby polymerizing the amino acids delivered by tRNAs into a polypeptide chain. The nascent polypeptides leave the ribosome through a tunnel in the LSU and interact with protein factors that function in enzymatic processing, targeting, and the membrane insertion of nascent chains at the exit of the ribosomal tunnel. The protein is Large ribosomal subunit protein uL29 of Candida albicans (strain SC5314 / ATCC MYA-2876) (Yeast).